Here is a 218-residue protein sequence, read N- to C-terminus: Molybdenum cofactor guanylyltransferase (218 aa).

Residues 16–18 (LAG), Lys28, Asn56, Asp74, and Asp109 contribute to the GTP site. Position 109 (Asp109) interacts with Mg(2+).

Belongs to the MobA family. In terms of assembly, monomer. It depends on Mg(2+) as a cofactor.

The protein resides in the cytoplasm. The enzyme catalyses Mo-molybdopterin + GTP + H(+) = Mo-molybdopterin guanine dinucleotide + diphosphate. Its function is as follows. Transfers a GMP moiety from GTP to Mo-molybdopterin (Mo-MPT) cofactor (Moco or molybdenum cofactor) to form Mo-molybdopterin guanine dinucleotide (Mo-MGD) cofactor. The chain is Molybdenum cofactor guanylyltransferase from Sinorhizobium fredii (strain NBRC 101917 / NGR234).